The following is a 332-amino-acid chain: 2,3-diketo-L-gulonate reductase (332 aa).

His44 serves as the catalytic Proton donor. Residues 168-174 (ITMVDMS), 224-225 (WK), and 304-306 (GHE) each bind NAD(+).

Belongs to the LDH2/MDH2 oxidoreductase family. DlgD subfamily. As to quaternary structure, homodimer.

The protein resides in the cytoplasm. The catalysed reaction is 3-dehydro-L-gulonate + NAD(+) = 2,3-dioxo-L-gulonate + NADH + H(+). It carries out the reaction 3-dehydro-L-gulonate + NADP(+) = 2,3-dioxo-L-gulonate + NADPH + H(+). In terms of biological role, catalyzes the reduction of 2,3-diketo-L-gulonate in the presence of NADH, to form 3-keto-L-gulonate. This chain is 2,3-diketo-L-gulonate reductase, found in Escherichia coli O127:H6 (strain E2348/69 / EPEC).